Consider the following 148-residue polypeptide: Large ribosomal subunit protein bL9 (148 aa).

It belongs to the bacterial ribosomal protein bL9 family.

In terms of biological role, binds to the 23S rRNA. The sequence is that of Large ribosomal subunit protein bL9 from Pseudomonas aeruginosa (strain LESB58).